The chain runs to 161 residues: Large ribosomal subunit protein uL23m (161 aa).

The N-terminal 34 residues, methionine 1 to valine 34, are a transit peptide targeting the mitochondrion.

It belongs to the universal ribosomal protein uL23 family. In terms of assembly, component of the mitochondrial large ribosomal subunit (mt-LSU). Mature yeast 74S mitochondrial ribosomes consist of a small (37S) and a large (54S) subunit. The 37S small subunit contains a 15S ribosomal RNA (15S mt-rRNA) and at least 32 different proteins. The 54S large subunit contains a 21S rRNA (21S mt-rRNA) and at least 45 different proteins. uL23m forms the wall of the exit tunnel. Interacts with the C-terminus of OXA1.

The protein localises to the mitochondrion. Its function is as follows. Component of the mitochondrial ribosome (mitoribosome), a dedicated translation machinery responsible for the synthesis of mitochondrial genome-encoded proteins, including at least some of the essential transmembrane subunits of the mitochondrial respiratory chain. The mitoribosomes are attached to the mitochondrial inner membrane and translation products are cotranslationally integrated into the membrane. The protein is Large ribosomal subunit protein uL23m (mrp20) of Schizosaccharomyces pombe (strain 972 / ATCC 24843) (Fission yeast).